The sequence spans 224 residues: UPF0758 protein CV_3079 (224 aa).

The 123-residue stretch at 102-224 (ALSSPQQVRD…AESFAERGWL (123 aa)) folds into the MPN domain. 3 residues coordinate Zn(2+): histidine 173, histidine 175, and aspartate 186. The JAMM motif motif lies at 173-186 (HNHPSGVSEPSSAD).

Belongs to the UPF0758 family.

The polypeptide is UPF0758 protein CV_3079 (Chromobacterium violaceum (strain ATCC 12472 / DSM 30191 / JCM 1249 / CCUG 213 / NBRC 12614 / NCIMB 9131 / NCTC 9757 / MK)).